A 485-amino-acid polypeptide reads, in one-letter code: Protein LAZ1 (485 aa).

At 1-19 the chain is on the cytoplasmic side; sequence MDILKSYHLLAAAYSAPAW. Residues 20–40 form a helical membrane-spanning segment; it reads ASFMAGAFLVLTLSLSLFLVF. The Lumenal portion of the chain corresponds to 41–53; the sequence is DHLSTYKNPEEQK. A helical transmembrane segment spans residues 54–74; sequence FLIGVILMVPCYSIESFASLV. The Cytoplasmic segment spans residues 75–167; sequence KPSISVDCGI…QVVKFGIVQY (93 aa). Residues 168-188 form a helical membrane-spanning segment; the sequence is MIIKSLTALTALILEAFGVYC. Residues 189–196 lie on the Lumenal side of the membrane; the sequence is EGEFKWGC. Residues 197–217 form a helical membrane-spanning segment; it reads GYPYLAVVLNFSQSWALYCLV. Residues 218–241 lie on the Cytoplasmic side of the membrane; that stretch reads QFYGATKDELAHIQPLAKFLTFKS. The chain crosses the membrane as a helical span at residues 242-262; it reads IVFLTWWQGVAIALLSSLGLF. Residues 263–277 are Lumenal-facing; the sequence is KSSIAQSLQLKTSVQ. A helical transmembrane segment spans residues 278–298; it reads DFIICIEMGIASVVHLYVFPA. The Cytoplasmic portion of the chain corresponds to 299–485; that stretch reads KPYGLMGDRF…VRGRRWITKD (187 aa). A coiled-coil region spans residues 384-415; the sequence is MEKSITKFNEKLHKISQNIKKHDKEKRRVKDD. The disordered stretch occupies residues 400–485; that stretch reads QNIKKHDKEK…VRGRRWITKD (86 aa). Residues 403-416 show a composition bias toward basic and acidic residues; that stretch reads KKHDKEKRRVKDDS. Over residues 455–469 the composition is skewed to polar residues; the sequence is GYTSAESGGESSSDQ. Over residues 476 to 485 the composition is skewed to basic and acidic residues; sequence VRGRRWITKD.

It belongs to the TMEM184 family.

The protein localises to the endomembrane system. It localises to the cell membrane. The protein resides in the cytoplasm. It is found in the cytosol. Required for programmed cell death (PCD) associated with hypersensitive response (HR). Involved both in the induction of EDS1/PAD4 mediated HR and in accelerated cell death in the acd11 mutant. Not required for HR induction elicited through pathways exclusively dependent on CC-NB-LRR resistance proteins. This Arabidopsis thaliana (Mouse-ear cress) protein is Protein LAZ1.